The following is a 432-amino-acid chain: Cyclin-A2 (432 aa).

The residue at position 1 (methionine 1) is an N-acetylmethionine. Position 5 is a phosphoserine (serine 5). Disordered stretches follow at residues 26-45 and 55-75; these read LQED…QQPR and SGNP…VAPL. At serine 55 the chain carries Phosphoserine.

Belongs to the cyclin family. Cyclin AB subfamily. In terms of assembly, interacts with the CDK1 and CDK2 protein kinases to form serine/threonine kinase holoenzyme complexes. Interacts with CDK1 (hyperphosphorylated form in G1 and underphosphorylated forms in S and G2). Interacts with CDK2; the interaction increases from G1 to G2. Interacts (associated with CDK2 but not with CDK1) with SCAPER; regulates the activity of CCNA2/CDK2 by transiently maintaining CCNA2 in the cytoplasm. Forms a ternary complex with CDK2 and CDKN1B; CDKN1B inhibits the kinase activity of CDK2 through conformational rearrangements. Interacts with INCA1. (Microbial infection) Interacts with human cytomegalovirus protein UL32. Polyubiquitinated via 'Lys-11'-linked ubiquitin by the anaphase-promoting complex (APC/C), leading to its degradation by the proteasome. Deubiquitinated and stabilized by USP37 enables entry into S phase. Ubiquitinated during the G1 phase by the SCF(FBXO31) complex, leading to its proteasomal degradation.

It is found in the nucleus. The protein resides in the cytoplasm. Functionally, cyclin which controls both the G1/S and the G2/M transition phases of the cell cycle. Functions through the formation of specific serine/threonine protein kinase holoenzyme complexes with the cyclin-dependent protein kinases CDK1 or CDK2. The cyclin subunit confers the substrate specificity of these complexes and differentially interacts with and activates CDK1 and CDK2 throughout the cell cycle. The chain is Cyclin-A2 from Homo sapiens (Human).